The primary structure comprises 274 residues: Mitogen-activated protein kinase 4 (274 aa).

Residues 1–8 and Lys-23 each bind ATP; that span reads GCGGNGLV. Residues 1–274 enclose the Protein kinase domain; it reads GCGGNGLVLS…KILTFSPMDR (274 aa). The Proton acceptor role is filled by Asp-123. A Phosphoserine modification is found at Ser-160. The short motif at 160-162 is the SEG motif element; the sequence is SEG.

Belongs to the protein kinase superfamily. CMGC Ser/Thr protein kinase family. MAP kinase subfamily. In terms of assembly, homodimer. Heterodimer with ERK3/MAPK6. Interacts with MAPKAPK5. Mg(2+) serves as cofactor. Post-translationally, phosphorylated by PAK1, PAK2 and PAK3 in the activation loop resulting in catalytic activation. Phosphorylated by MAPKAPK5 at other sites. As to expression, exclusively detected in the brain, where expression is restricted to the choroid plexus and hippocampus, and to a lesser extent in lung.

It is found in the cytoplasm. It localises to the nucleus. The catalysed reaction is L-seryl-[protein] + ATP = O-phospho-L-seryl-[protein] + ADP + H(+). The enzyme catalyses L-threonyl-[protein] + ATP = O-phospho-L-threonyl-[protein] + ADP + H(+). With respect to regulation, activated by phosphorylation in the activation loop. Atypical MAPK protein. Phosphorylates microtubule-associated protein 2 (MAP2) and MAPKAPK5. The precise role of the complex formed with MAPKAPK5 is still unclear, but the complex follows a complex set of phosphorylation events: upon interaction with atypical MAPKAPK5, ERK4/MAPK4 is phosphorylated and then mediates phosphorylation and activation of MAPKAPK5, which in turn phosphorylates ERK4/MAPK4. May promote entry in the cell cycle. This Rattus norvegicus (Rat) protein is Mitogen-activated protein kinase 4 (Mapk4).